A 214-amino-acid chain; its full sequence is Glycine-rich protein 2 (214 aa).

Positions 8-75 (RAKGTVKWFS…RTKAVDVTGP (68 aa)) constitute a CSD domain. The segment at 54 to 91 (TVEFEVESGGDGRTKAVDVTGPDGAAVQGGRGGGGGGG) is disordered. Positions 80-91 (VQGGRGGGGGGG) are enriched in gly residues. CCHC-type zinc fingers lie at residues 157–174 (SGCFKCGESGHFARDCSQ) and 194–211 (GGCYKCGEDGHFARECTS).

In Nicotiana sylvestris (Wood tobacco), this protein is Glycine-rich protein 2 (GRP-2).